The primary structure comprises 165 residues: Mitochondrial fission process protein 1 (165 aa).

3 helical membrane-spanning segments follow: residues 35–55 (ALVP…YVTA), 76–96 (VCVC…SVAV), and 130–150 (IGLS…DLLL).

It belongs to the MTFP1 family.

The protein localises to the mitochondrion inner membrane. In terms of biological role, involved in the mitochondrial division probably by regulating membrane fission. Loss-of-function leads to apoptosis. In Danio rerio (Zebrafish), this protein is Mitochondrial fission process protein 1 (mtfp1).